The chain runs to 306 residues: D-alanine--D-alanine ligase (306 aa).

Residues Lys-101–Glu-303 enclose the ATP-grasp domain. Ile-134–Thr-189 lines the ATP pocket. Mg(2+)-binding residues include Asp-257, Glu-270, and Asn-272.

This sequence belongs to the D-alanine--D-alanine ligase family. Mg(2+) is required as a cofactor. The cofactor is Mn(2+).

The protein resides in the cytoplasm. The enzyme catalyses 2 D-alanine + ATP = D-alanyl-D-alanine + ADP + phosphate + H(+). Its pathway is cell wall biogenesis; peptidoglycan biosynthesis. Its function is as follows. Cell wall formation. This Erwinia tasmaniensis (strain DSM 17950 / CFBP 7177 / CIP 109463 / NCPPB 4357 / Et1/99) protein is D-alanine--D-alanine ligase.